The chain runs to 314 residues: MKRQNQSCVVEFILLGFSNFPELQVQLFGVFLVIYVVTLMGNAIITVIISLNQSLHVPMYLFLLNLSVVEVSFSAVITPEMLVVLSTEKTMISFVGCFAQMYFILLFGGTECFLLGAMAYDRFAAICHPLNYPVIMNRGVFMKLVIFSWISGIMVATVQTTWVFSFPFCGPNEINHLFCETPPVLELVCADTFLFEIYAFTGTILIVMVPFLLILLSYIRVLFAILKMPSTTGRQKAFSTCASHLTSVTLFYGTANMTYLQPKSGYSPETKKLISLAYTLLTPLLNPLIYSLRNSEMKRTLIKLWRRKVILHTF.

The Extracellular segment spans residues 1 to 25 (MKRQNQSCVVEFILLGFSNFPELQV). Residue asparagine 5 is glycosylated (N-linked (GlcNAc...) asparagine). A helical transmembrane segment spans residues 26–46 (QLFGVFLVIYVVTLMGNAIIT). The Cytoplasmic portion of the chain corresponds to 47–54 (VIISLNQS). Residues 55–75 (LHVPMYLFLLNLSVVEVSFSA) traverse the membrane as a helical segment. Residues 76-99 (VITPEMLVVLSTEKTMISFVGCFA) are Extracellular-facing. A disulfide bridge links cysteine 97 with cysteine 189. A helical membrane pass occupies residues 100–120 (QMYFILLFGGTECFLLGAMAY). At 121–139 (DRFAAICHPLNYPVIMNRG) the chain is on the cytoplasmic side. Residues 140 to 160 (VFMKLVIFSWISGIMVATVQT) traverse the membrane as a helical segment. Topologically, residues 161 to 197 (TWVFSFPFCGPNEINHLFCETPPVLELVCADTFLFEI) are extracellular. Residues 198-217 (YAFTGTILIVMVPFLLILLS) traverse the membrane as a helical segment. Residues 218-237 (YIRVLFAILKMPSTTGRQKA) lie on the Cytoplasmic side of the membrane. Residues 238–258 (FSTCASHLTSVTLFYGTANMT) traverse the membrane as a helical segment. At 259-271 (YLQPKSGYSPETK) the chain is on the extracellular side. The helical transmembrane segment at 272–292 (KLISLAYTLLTPLLNPLIYSL) threads the bilayer. The Cytoplasmic segment spans residues 293 to 314 (RNSEMKRTLIKLWRRKVILHTF).

This sequence belongs to the G-protein coupled receptor 1 family.

The protein localises to the cell membrane. Functionally, odorant receptor. This Homo sapiens (Human) protein is Olfactory receptor 10A3 (OR10A3).